The sequence spans 117 residues: Ribonuclease P protein component (117 aa).

The protein belongs to the RnpA family. Consists of a catalytic RNA component (M1 or rnpB) and a protein subunit.

The enzyme catalyses Endonucleolytic cleavage of RNA, removing 5'-extranucleotides from tRNA precursor.. RNaseP catalyzes the removal of the 5'-leader sequence from pre-tRNA to produce the mature 5'-terminus. It can also cleave other RNA substrates such as 4.5S RNA. The protein component plays an auxiliary but essential role in vivo by binding to the 5'-leader sequence and broadening the substrate specificity of the ribozyme. The sequence is that of Ribonuclease P protein component from Thermotoga sp. (strain RQ2).